Reading from the N-terminus, the 149-residue chain is Alpha-crystallin A chain (149 aa).

The sHSP domain maps to 41-149; that stretch reads LFRSVLESGI…DASHGERPIP (109 aa). Zn(2+)-binding residues include His-89, Glu-91, His-96, and His-143.

Belongs to the small heat shock protein (HSP20) family. In terms of assembly, heteropolymer composed of three CRYAA and one CRYAB subunits. Inter-subunit bridging via zinc ions enhances stability, which is crucial as there is no protein turn over in the lens. Can also form homodimers and homotetramers (dimers of dimers) which serve as the building blocks of homooligomers. Within homooligomers, the zinc-binding motif is created from residues of 3 different molecules. His-89 and Glu-91 from one molecule are ligands of the zinc ion, and His-96 and His-143 residues from additional molecules complete the site with tetrahedral coordination geometry. Part of a complex required for lens intermediate filament formation composed of BFSP1, BFSP2 and CRYAA.

It localises to the cytoplasm. It is found in the nucleus. Functionally, contributes to the transparency and refractive index of the lens. May act as a chaperone, preventing aggregation of various proteins under a wide range of stress conditions. This is Alpha-crystallin A chain (CRYAA) from Columba livia (Rock dove).